An 862-amino-acid chain; its full sequence is Rab GTPase-binding effector protein 1 (862 aa).

Ala-2 carries the post-translational modification N-acetylalanine. Positions 11 to 328 form a coiled coil; that stretch reads DVSLQQRVAE…KDQEEDEQQR (318 aa). Residue Lys-282 is modified to N6-acetyllysine. Disordered stretches follow at residues 315-340 and 355-374; these read ELKKKDQEEDEQQRINKGKDNKKIDT and EESSTPLSNEEEHLDSTHGS. 3 positions are modified to phosphoserine: Ser-374, Ser-377, and Ser-407. At Thr-408 the chain carries Phosphothreonine. Ser-410 bears the Phosphoserine mark. The stretch at 534–816 forms a coiled coil; that stretch reads DMCSNYEKQL…LQTELDVSEQ (283 aa).

It belongs to the rabaptin family. Heterodimer with RABGEF1. The heterodimer binds RAB4A and RAB5A that have been activated by GTP-binding. Interacts with TSC2. Interacts with GGA1 (via GAE domain), GGA2 (via GAE domain) and GGA3 (via GAE domain). Interacts with AP1G1 (via GAE domain). Interacts with AP1G2 (via GAE domain). Interacts with ECPAS. Interacts with KCNH1. Interacts with PKD1 (via C-terminal domain) and GGA1; the interactions recruit PKD1:PKD2 complex to GGA1 and ARL3 at trans-Golgi network. Interacts with KCNH1. In terms of processing, proteolytic cleavage by caspases in apoptotic cells causes loss of endosome fusion activity.

It is found in the cytoplasm. The protein resides in the early endosome. Its subcellular location is the recycling endosome. The protein localises to the cytoplasmic vesicle. Functionally, rab effector protein acting as linker between gamma-adaptin, RAB4A and RAB5A. Involved in endocytic membrane fusion and membrane trafficking of recycling endosomes. Involved in KCNH1 channels trafficking to and from the cell membrane. Stimulates RABGEF1 mediated nucleotide exchange on RAB5A. Mediates the traffic of PKD1:PKD2 complex from the endoplasmic reticulum through the Golgi to the cilium. The polypeptide is Rab GTPase-binding effector protein 1 (Rabep1) (Rattus norvegicus (Rat)).